A 719-amino-acid polypeptide reads, in one-letter code: Glutathionylspermidine synthase (719 aa).

The Peptidase C51 domain maps to 54–200 (CLPLSSFERK…TESGEVELLD (147 aa)). Residue arginine 350 coordinates glutathione. 350-352 (RFD) contributes to the ATP binding site. Aspartate 352, glutamate 364, and asparagine 366 together coordinate Mg(2+). Serine 369 serves as a coordination point for glutathione. Glutamate 432 contacts spermidine. Residues glutamate 433 and threonine 501 each coordinate glutathione. ATP contacts are provided by residues lysine 544, lysine 579, glycine 586, glutamine 653, and 689 to 691 (KIT).

This sequence in the C-terminal section; belongs to the glutathionylspermidine synthase preATP-grasp family. It depends on Mg(2+) as a cofactor. The N-terminus is blocked.

The catalysed reaction is spermidine + glutathione + ATP = glutathionylspermidine + ADP + phosphate + H(+). Its function is as follows. Conjugates glutathione (gamma-Glu-Cys-Gly) and spermidine to form glutathionylspermidine in the biosynthesis trypanothione (N(1),N(8)-bis(glutathionyl)spermidine), which is involved in maintaining intracellular thiol redox and in defense against oxidants. The chain is Glutathionylspermidine synthase (GSP) from Crithidia fasciculata.